A 335-amino-acid polypeptide reads, in one-letter code: Nucleoid-associated protein Pput_1012 (335 aa).

It belongs to the YejK family.

The protein resides in the cytoplasm. The protein localises to the nucleoid. In Pseudomonas putida (strain ATCC 700007 / DSM 6899 / JCM 31910 / BCRC 17059 / LMG 24140 / F1), this protein is Nucleoid-associated protein Pput_1012.